The sequence spans 63 residues: MPKMKTVRGAAKRFKVGKNKIKRGSAFRSHILTKMSQTRKRDLRGPQFVDKTNVAAVKKMLCK.

The protein belongs to the bacterial ribosomal protein bL35 family.

In Campylobacter hominis (strain ATCC BAA-381 / DSM 21671 / CCUG 45161 / LMG 19568 / NCTC 13146 / CH001A), this protein is Large ribosomal subunit protein bL35.